Here is a 166-residue protein sequence, read N- to C-terminus: Small ribosomal subunit protein uS5 (166 aa).

The 64-residue stretch at 12–75 (YIEKLVQVNR…EAARRNMIQV (64 aa)) folds into the S5 DRBM domain.

The protein belongs to the universal ribosomal protein uS5 family. In terms of assembly, part of the 30S ribosomal subunit. Contacts proteins S4 and S8.

In terms of biological role, with S4 and S12 plays an important role in translational accuracy. Functionally, located at the back of the 30S subunit body where it stabilizes the conformation of the head with respect to the body. This chain is Small ribosomal subunit protein uS5, found in Pseudomonas aeruginosa (strain LESB58).